The following is a 367-amino-acid chain: MKKQRVVVKIGSSSLADSHGGISTEQLSDHVAALARLKEDGHEVVLITSGAVAAGFSALGYPSRPVTIKGKQAAAAVGQSLLMQAYTEEFRKYGIVTAQLLLTRSDFSRKEQYSNAYATLGELLNRSALPIINENDSISLEELTFGDNDMLSALVSGLVSADMLMIFTDVNGLYDKNPQKNADAKKYYFLPEVTEEISSLAGDAGSKLGTGGMKSKIDAAKTALSLGVSVFIGTGRGQEKFVNVLKGKGDGTYVGNAPQKEMKMNKQWIALHSLVSGQIEVDAGAATAIIQHGKSLLPAGVTNVSRFFQVGEVVEVVTQQGRVIGKGQCTYSAEELIDVKGMQSQDIQVRGERHSYEVIHRDHWVSL.

Position 9 (lysine 9) interacts with ATP. Serine 49, aspartate 136, and asparagine 148 together coordinate substrate. ATP-binding positions include 168–169 (TD) and 210–216 (TGGMKSK). One can recognise a PUA domain in the interval 276–350 (SGQIEVDAGA…GMQSQDIQVR (75 aa)).

It belongs to the glutamate 5-kinase family.

It localises to the cytoplasm. It catalyses the reaction L-glutamate + ATP = L-glutamyl 5-phosphate + ADP. It participates in amino-acid biosynthesis; L-proline biosynthesis; L-glutamate 5-semialdehyde from L-glutamate: step 1/2. In terms of biological role, catalyzes the transfer of a phosphate group to glutamate to form L-glutamate 5-phosphate. The chain is Glutamate 5-kinase from Bacillus cereus (strain ATCC 14579 / DSM 31 / CCUG 7414 / JCM 2152 / NBRC 15305 / NCIMB 9373 / NCTC 2599 / NRRL B-3711).